The chain runs to 496 residues: NADP-dependent glyceraldehyde-3-phosphate dehydrogenase (496 aa).

Residues R116 and 169 to 170 (NY) contribute to the substrate site. 3 residues coordinate NADP(+): K192, T195, and D230. 245 to 249 (GGDTG) is an NAD(+) binding site. The active-site Proton acceptor is the E264. 297–299 (RCT) contacts substrate. The active-site Nucleophile is C298. E391 contacts NADP(+). R451 contributes to the substrate binding site.

The protein belongs to the aldehyde dehydrogenase family.

It is found in the cytoplasm. It carries out the reaction D-glyceraldehyde 3-phosphate + NADP(+) + H2O = (2R)-3-phosphoglycerate + NADPH + 2 H(+). Its function is as follows. Important as a means of generating NADPH for biosynthetic reactions. The protein is NADP-dependent glyceraldehyde-3-phosphate dehydrogenase (GAPN) of Pisum sativum (Garden pea).